A 72-amino-acid polypeptide reads, in one-letter code: Large ribosomal subunit protein uL29 (72 aa).

Belongs to the universal ribosomal protein uL29 family.

This chain is Large ribosomal subunit protein uL29, found in Prochlorococcus marinus (strain MIT 9515).